The chain runs to 509 residues: DAP3-binding cell death enhancer 1 (509 aa).

The transit peptide at 1–23 (MWRLTGILGRALPRLLGPGFRGI) directs the protein to the mitochondrion. Disordered regions lie at residues 19–60 (GFRG…RNRD) and 143–185 (VLPS…PGLL). A propeptide spans 24–101 (TPKPTSSDGP…AVLALHLARQ (78 aa)) (extended MTS). The segment covering 26–40 (KPTSSDGPQTTSTTL) has biased composition (polar residues). 2 stretches are compositionally biased toward basic and acidic residues: residues 46–60 (NFDR…RNRD) and 156–168 (GLRE…EEPA). 7 TPR repeats span residues 213–245 (AGPP…QLSV), 246–278 (AIAF…RGYS), 279–313 (KAQY…VQGH), 314–351 (SLAQ…DSGL), 352–385 (TEAQ…SNGD), 386–423 (SQSR…GNEP), and 470–498 (ASST…AMPS). Residues 307–326 (LAAVQGHSLAQYRYARCLLQ) carry the SIFI-degron motif.

The protein belongs to the DELE1 family. As to quaternary structure, interacts with DAP3. Interacts (via TPR repeats) with EIF2AK1/HRI; activating the protein kinase activity of EIF2AK1/HRI, thereby promoting the integrated stress response (ISR). In terms of assembly, homooctamer; oligomerization is required to activate EIF2AK1/HRI. Interacts (via TPR repeats) with EIF2AK1/HRI; activating the protein kinase activity of EIF2AK1/HRI, thereby promoting the integrated stress response (ISR). Unstable protein in absence of stress: imported in the mitochondrial matrix following processing by the mitochondrial-processing peptidase (MPP), where it is degraded by LONP1. Stabilized in response to iron deficiency: iron deficiency impairs mitochondrial import, promoting localization at the mitochondrial surface and stabilization. Cleaved by OMA1 in response to mitochondrial stress, generating the DAP3-binding cell death enhancer 1 short form (DELE1(S) or S-DELE1) that accumulates in the cytosol and activates the protein kinase activity of EIF2AK1/HRI. Protein cleavage by OMA1 can take place at different positions, and apparently does not require a specific sequence motif. In terms of processing, ubiquitinated and degraded by the SIFI complex once the mitochondrial stress has been resolved, thereby providing stress response silencing. Within the SIFI complex, UBR4 initiates ubiquitin chain that are further elongated or branched by KCMF1.

The protein localises to the mitochondrion. The protein resides in the mitochondrion outer membrane. Its subcellular location is the mitochondrion inner membrane. It localises to the cytoplasm. It is found in the cytosol. Its function is as follows. Protein kinase activator that acts as a key activator of the integrated stress response (ISR) following various stresses, such as iron deficiency, mitochondrial stress or mitochondrial DNA breaks. Detects impaired protein import and processing in mitochondria, activating the ISR. May also required for the induction of death receptor-mediated apoptosis through the regulation of caspase activation. Protein kinase activator that activates the ISR in response to iron deficiency: iron deficiency impairs mitochondrial import, promoting DELE1 localization at the mitochondrial surface, where it binds and activates EIF2AK1/HRI to trigger the ISR. In terms of biological role, protein kinase activator generated by protein cleavage in response to mitochondrial stress, which accumulates in the cytosol and specifically binds to and activates the protein kinase activity of EIF2AK1/HRI. It thereby activates the integrated stress response (ISR): EIF2AK1/HRI activation promotes eIF-2-alpha (EIF2S1) phosphorylation, leading to a decrease in global protein synthesis and the induction of selected genes, including the transcription factor ATF4, the master transcriptional regulator of the ISR. Also acts as an activator of PRKN-independent mitophagy: activates the protein kinase activity of EIF2AK1/HRI in response to mitochondrial damage, promoting eIF-2-alpha (EIF2S1) phosphorylation, leading to mitochondrial localization of EIF2S1 followed by induction of mitophagy. The polypeptide is DAP3-binding cell death enhancer 1 (Rattus norvegicus (Rat)).